The primary structure comprises 344 residues: Nuclear distribution protein nudE-like 1-A (344 aa).

Positions 26–187 (YKKSYKEAQE…RQELAVRDTR (162 aa)) form a coiled coil. Residues 181–190 (LAVRDTRSEV) show a composition bias toward basic and acidic residues. Disordered stretches follow at residues 181 to 209 (LAVR…TDSA) and 322 to 344 (PGDG…VLSV).

The protein belongs to the nudE family. Phosphorylated in mitosis.

The protein localises to the cytoplasm. It is found in the cytoskeleton. Its subcellular location is the microtubule organizing center. The protein resides in the centrosome. It localises to the spindle. Its function is as follows. Required for organization of the cellular microtubule array and microtubule anchoring at the centrosome. Positively regulates the activity of the minus-end directed microtubule motor protein dynein. May enhance dynein-mediated microtubule sliding by targeting dynein to the microtubule plus end. The protein is Nuclear distribution protein nudE-like 1-A (ndel1a) of Danio rerio (Zebrafish).